The primary structure comprises 348 residues: MVHQLSLVSSIAHGSYVQTVSTLQAFTGMLSPQPIATYTLLTKPHEVFKPKFEPGKVNQIEQYYMKCITTWSDGSEFDLASAVIKENGSSNVFSGRLFHAEDESVQRIWTLQISDIPIAGKNQACSAQTIYESTLIHTHTNVKSEENKIDAMDVDLEHKDKSDVKGDTKEKEEDKKEEDKKEEDKKEEDKKEEDKKEEDKKEEEKVEKKNDEVKHSEVNLEDGAETGSGHKDSFLQFLEDLGYETISQYWIKGIRFFHGDIVIEIFKVLVRDDEVTEPKEEGKIALKLLDESNTFQIRTYINIAKSTDIDLINQGTKELLRLQEFLKNLFKLEIPDRMFMDSRVQVRK.

Over residues 152–218 (MDVDLEHKDK…KNDEVKHSEV (67 aa)) the composition is skewed to basic and acidic residues. Positions 152–227 (MDVDLEHKDK…VNLEDGAETG (76 aa)) are disordered. Residues 167-223 (DTKEKEEDKKEEDKKEEDKKEEDKKEEDKKEEDKKEEEKVEKKNDEVKHSEVNLEDG) are a coiled coil.

It belongs to the Mediator complex subunit 18 family. In terms of assembly, component of the Mediator complex.

It is found in the nucleus. Functionally, component of the Mediator complex, a coactivator involved in the regulated transcription of nearly all RNA polymerase II-dependent genes. Mediator functions as a bridge to convey information from gene-specific regulatory proteins to the basal RNA polymerase II transcription machinery. Mediator is recruited to promoters by direct interactions with regulatory proteins and serves as a scaffold for the assembly of a functional preinitiation complex with RNA polymerase II and the general transcription factors. The sequence is that of Mediator of RNA polymerase II transcription subunit 18 (SRB5) from Scheffersomyces stipitis (strain ATCC 58785 / CBS 6054 / NBRC 10063 / NRRL Y-11545) (Yeast).